The sequence spans 427 residues: Four-jointed box protein 1 (427 aa).

An N-terminal signal peptide occupies residues 1 to 18; sequence MRALSANLFAVLLMCALA. Asparagine 81, asparagine 244, and asparagine 270 each carry an N-linked (GlcNAc...) asparagine glycan.

The protein resides in the secreted. In terms of biological role, may act as an inhibitor of dendrite extension and branching. This chain is Four-jointed box protein 1 (fjx1), found in Xiphophorus maculatus (Southern platyfish).